A 1339-amino-acid chain; its full sequence is MNNKSLLDLSSEPAIKDTDILSYFDANLPFKKRHQIVRSIYHGLKYYIYSSTSIIQVWQNIQDFISTKNDNAAFRELVYNLMMRYVSTQKHLSIIERHTFFQTIEKDPFQDIAELQLRLKSLSVLTDEGHKISGIENRVGPLLSAWFNQYLQWQSQATELQGKDADSKLVHLLFFKSLFKFSTNLVKFQWFLVPEPQMLQLVNSVVQICNHARLEDVVTEVLMFFDSMIRYSVIPKASLYDTVLILCSTYISTYSYSKLAQSVIFNLISSPVSNLAFENVFNILQYNRSNVNAVRGAVRLMRFLMLQEVKNDAIASITLSSSIEFTEFPLGFNENVDFEILGTVYLFLRTPSILNRLNFLDWHRILNILMYCSQYLPLKASTSKEAFSKTAAFANIYDRVLDFLDFEALIPLLQQFQVKLVFFLKDVLPVLKPKIRKKLLRLFETYNLIFPCNQYWVFNLEFLLGIYQCKTFDLEDRALLFKLVEDACSVADENSAPILCSKFLFPVIESFSKESDDCVVSPVYNMLFFLSVNFQNPGLKDCIDHIFQQLISDTSSVTVRRLATSTLIRLFYYYYDLRDAVPIQETLAKMLEILETPSFPFVSRMLCLQFFLRFRANGTSIYICENIDLNEPFKVLNVDSELIPAVYPISDSFVNSATVEKHIWERKENDLIKISNHSTEYGKDFVTFPTSSLLRFYRKSMATESNWTILMFMITHLADQISNRSMFIGALEEIYNLLDFMCDIVFERVSISAEIPSNIRKANIMIPILQNVQMLFVYHDQFSRAQEDELVSVFFAGLQKWNEACHVSIHSLMLCCYELPVSIRKQLPAILVTLSRLITKPDLSVHILEFLCSLARLPDLIANFTDADYRQIFAIALKYIQHRDFTKESKDSNDTESILKNSYSSYVLALAYSVLQIWFLSLRLTERKKFVPWILRGLKLASEGKPLEDLCLVQYDMMQQFCYSNSDINNQTSTFVDSDVESETWIRGNSLFTINVSVNSGFLEAVIRRPTGTTQYTFRNEASLQKFLWEENLTSSKALTRGLLCTPSSFVSHFLDPHGISLYNQPLLLPSNDDSVRRAISVFDRIPVIESLKAGLVYVGYQQRREADILANTNPSEDFLTFLNGLGTLFELKTDQKVFAGGLDRENDIDGAFAYCWKDKVTQMVFHCTTMMPTNIEHDPGCTLKKRHIGNDFVTIIFNESGLEYDFDTIPSQFNFVNIVITPESESIRRTGRQIKFYKVKALTKYDIDFSLFRRYKIVSSDALPAIVRDVTLNAAVFSHIYHRSAGDYVHIWAERLRQLKRLREKFQASVLPEDYNLDEQTKTKLQNGTNFSDFTSYL.

Position 1036 is a phosphoserine (Ser-1036). Positions 1109–1303 constitute a Rap-GAP domain; sequence ILANTNPSED…AERLRQLKRL (195 aa).

Interacts with tsc1.

It localises to the cytoplasm. The protein resides in the nucleus. Together with tsc1, required for uptake of various amino acids from the environment and for proper conjugation. Involved in induction of gene expression of permeases and genes required for meiosis upon nitrogen starvation. May act as a GTPase-activating protein (GAP) for the small GTPase rhb1. This Schizosaccharomyces pombe (strain 972 / ATCC 24843) (Fission yeast) protein is Tuberous sclerosis 2 protein homolog (tsc2).